The following is a 238-amino-acid chain: Lipid transferase CIDEC (238 aa).

The segment at 1-35 (MDYAMKSLSLLYPRSLSRHVAVSTAVVTQQLVSEP) is required for liquid-liquid phase separation (LLPS). The CIDE-N domain maps to 41 to 118 (RARPCRVSTA…VLQKGQKWKS (78 aa)).

The protein belongs to the CIDE family. As to quaternary structure, homodimer. Interacts with CIDEA. Homooligomer; undergoes liquid-liquid phase separation (LLPS) via its N-terminus, facilitating lipid droplet fusion, occurs at the lipid droplet contact sites. Interacts with PLIN1. Interacts with NFAT5; this interaction is direct and retains NFAT5 in the cytoplasm. Interacts with CEBPB. Interacts with isoform CLSTN3beta of CLSTN3; inhibiting the lipid transferase activity of CIDEC. In terms of processing, ubiquitinated and targeted to proteasomal degradation, resulting in a short half-life (about 15 minutes in 3T3-L1 cells). Protein stability depends on triaclyglycerol synthesis, fatty acid availability and lipid droplet formation.

The protein resides in the lipid droplet. The protein localises to the endoplasmic reticulum. It localises to the nucleus. It catalyses the reaction a triacyl-sn-glycerol(in) = a triacyl-sn-glycerol(out). In terms of biological role, lipid transferase specifically expressed in white adipose tissue, which promotes unilocular lipid droplet formation by mediating lipid droplet fusion. Lipid droplet fusion promotes their enlargement, restricting lipolysis and favoring lipid storage. Localizes on the lipid droplet surface, at focal contact sites between lipid droplets, and mediates atypical lipid droplet fusion by undergoing liquid-liquid phase separation (LLPS) and promoting directional net neutral lipid transfer from the smaller to larger lipid droplets. The transfer direction may be driven by the internal pressure difference between the contacting lipid droplet pair. Its role in neutral lipid transfer and lipid droplet enlargement is activated by the interaction with PLIN1. May also act as a CEBPB coactivator in the white adipose tissue to control the expression of a subset of CEBPB downstream target genes, including SOCS1, SOCS3, TGFB1, TGFBR1, ID2 and XDH. When overexpressed in preadipocytes, induces apoptosis or increases cell susceptibility to apoptosis induced by serum deprivation or TGFB treatment. The protein is Lipid transferase CIDEC of Rattus norvegicus (Rat).